A 61-amino-acid chain; its full sequence is Small ribosomal subunit protein uS14B (61 aa).

Cys24, Cys27, Cys40, and Cys43 together coordinate Zn(2+).

The protein belongs to the universal ribosomal protein uS14 family. Zinc-binding uS14 subfamily. In terms of assembly, part of the 30S ribosomal subunit. Contacts proteins S3 and S10. The cofactor is Zn(2+).

Binds 16S rRNA, required for the assembly of 30S particles and may also be responsible for determining the conformation of the 16S rRNA at the A site. The sequence is that of Small ribosomal subunit protein uS14B from Streptococcus agalactiae serotype Ia (strain ATCC 27591 / A909 / CDC SS700).